Here is a 527-residue protein sequence, read N- to C-terminus: RUS family member 1 (527 aa).

An N-linked (GlcNAc...) asparagine glycan is attached at asparagine 21. A helical membrane pass occupies residues 220 to 240 (SQETAVNLVGMLLSVIVSSFI). An N-linked (GlcNAc...) asparagine glycan is attached at asparagine 243. The chain crosses the membrane as a helical span at residues 245-265 (SLIVTWLVFLFFTSLHLFCNY). N-linked (GlcNAc...) asparagine glycosylation is present at asparagine 346. Positions 350 to 426 (TKNVNNNNNN…NNNNNNNNNK (77 aa)) are disordered. N-linked (GlcNAc...) asparagine glycans are attached at residues asparagine 467 and asparagine 497.

It belongs to the RUS1 family.

The protein resides in the membrane. The sequence is that of RUS family member 1 (rusf1) from Dictyostelium discoideum (Social amoeba).